The chain runs to 240 residues: Transmembrane protein 65 (240 aa).

Residues 1-61 (MSRLLPLLRS…RRLGTHPKKE (61 aa)) constitute a mitochondrion transit peptide. Residues 62–110 (PMEALNTAQGARDFIYSLHSTERSCLLKELHRFESIAIAQEKLEAPPPT) lie on the Cytoplasmic side of the membrane. A helical transmembrane segment spans residues 111–131 (PGQLRYVFIHNAIPFIGFGFL). Over 132 to 142 (DNAIMIVAGTH) the chain is Extracellular. A helical transmembrane segment spans residues 143–165 (IEMSIGIILGISTMAAAALGNLV). At 166–209 (SDLAGLGLAGYVEALASRLGLSIPDLTPKQVDMWQTRLSTHLGK) the chain is on the cytoplasmic side. Residues 210–230 (AVGVTIGCILGMFPLIFFGGG) form a helical membrane-spanning segment. Residues 231–240 (EEDEKLETKS) are Extracellular-facing.

Monomer. Homodimer. Interacts with GJA1. Interacts weakly with DSP. Interacts with SCN1B. In terms of tissue distribution, predominantly expressed the ventricular tissue (at protein level).

The protein localises to the cell membrane. Its subcellular location is the mitochondrion inner membrane. Essential for maintaining proper cardiac intercalated disk (ICD) structure and function as well as cardiac conduction velocity in the heart. Its association with SCN1B is required for stabilizing the perinexus in the ICD and for localization of GJA1 and SCN5A to the ICD. May regulate the function of the gap junction protein GJA1 and may contribute to the stability and proper localization of GJA1 to cardiac intercalated disk thereby regulating gap junction communication. May also play a role in the regulation of mitochondrial respiration and mitochondrial DNA copy number maintenance. This Homo sapiens (Human) protein is Transmembrane protein 65 (TMEM65).